Reading from the N-terminus, the 607-residue chain is Transporter aclS (607 aa).

Helical transmembrane passes span 67-87, 91-111, 152-172, 192-212, 221-241, 262-282, 317-337, 364-384, 423-443, 445-465, 500-520, and 531-551; these read LGGSLVASSLSVWQTMVAVVL, IAAIVAILIGYIGAEWHIGFP, LTVVGFAFQSYTGGLCVTAIL, VTTQQIIGWAIFNIISIPVLY, LMIGMNIMSFAALLGIMIWSL, SLGFGIMQGITTVVGTLSIAL, VFGQWFTFIIIGSIMPLFGCL, AAAVFAGIGLVSSQLALNVVD, GCYVGLILGMALCPWELLASA, TFVSVISSFSIFMAPFCGIHI, GVLPWLVGWVPLLPGFMHSIN, and HLYALGFPYGLLSSMAIHTLV. The tract at residues 583–607 is disordered; sequence NKDSTEEDSDRSLRRESREVVETKV. Residues 592 to 607 show a composition bias toward basic and acidic residues; it reads DRSLRRESREVVETKV.

This sequence belongs to the purine-cytosine permease (2.A.39) family.

Its subcellular location is the membrane. In terms of biological role, transporter; part of the gene cluster that mediates the biosynthesis of aspirochlorine (or antibiotic A30641), an unusual halogenated spiro compound with distinctive antifungal properties due to selective inhibition of protein biosynthesis, and which is also active against bacteria, viruses, and murine tumor cells. The polypeptide is Transporter aclS (Aspergillus oryzae (strain ATCC 42149 / RIB 40) (Yellow koji mold)).